The chain runs to 988 residues: Transposase for transposon Tn1546 (988 aa).

This sequence belongs to the transposase 7 family.

Its function is as follows. Required for transposition of transposon Tn1546. In Enterococcus faecium (Streptococcus faecium), this protein is Transposase for transposon Tn1546.